A 321-amino-acid chain; its full sequence is Acetyl-coenzyme A carboxylase carboxyl transferase subunit alpha (321 aa).

One can recognise a CoA carboxyltransferase C-terminal domain in the interval 39–293; sequence RLQQKSQNLA…RRALGDALRQ (255 aa).

Belongs to the AccA family. Acetyl-CoA carboxylase is a heterohexamer composed of biotin carboxyl carrier protein (AccB), biotin carboxylase (AccC) and two subunits each of ACCase subunit alpha (AccA) and ACCase subunit beta (AccD).

The protein localises to the cytoplasm. It carries out the reaction N(6)-carboxybiotinyl-L-lysyl-[protein] + acetyl-CoA = N(6)-biotinyl-L-lysyl-[protein] + malonyl-CoA. It participates in lipid metabolism; malonyl-CoA biosynthesis; malonyl-CoA from acetyl-CoA: step 1/1. Component of the acetyl coenzyme A carboxylase (ACC) complex. First, biotin carboxylase catalyzes the carboxylation of biotin on its carrier protein (BCCP) and then the CO(2) group is transferred by the carboxyltransferase to acetyl-CoA to form malonyl-CoA. The polypeptide is Acetyl-coenzyme A carboxylase carboxyl transferase subunit alpha (Bordetella bronchiseptica (strain ATCC BAA-588 / NCTC 13252 / RB50) (Alcaligenes bronchisepticus)).